The sequence spans 353 residues: GDSL esterase/lipase APG (353 aa).

Residues 1 to 25 (MDRCTSSFLLLTLVSTLSILQISFA) form the signal peptide. The active-site Nucleophile is Ser-37. N-linked (GlcNAc...) asparagine glycans are attached at residues Asn-197 and Asn-320. Catalysis depends on residues Asp-328 and His-331.

The protein belongs to the 'GDSL' lipolytic enzyme family.

It localises to the secreted. The chain is GDSL esterase/lipase APG (APG) from Arabidopsis thaliana (Mouse-ear cress).